The chain runs to 103 residues: Cyclotide vitri-A (103 aa).

Residues 1-9 form the signal peptide; sequence AAFALPAFA. The propeptide occupies 10-69; it reads SFEKDVITPAALEAVLNRKAPLSNIMMENDAIVNVIANVKTVISNPVLEEALLKTNHGVN. Positions 70–99 form a cross-link, cyclopeptide (Gly-Asn); that stretch reads GIPCGESCVWIPCITSAIGCSCKSKVCYRN. 3 disulfide bridges follow: cysteine 73-cysteine 89, cysteine 77-cysteine 91, and cysteine 82-cysteine 96. The propeptide occupies 100–103; that stretch reads SLDN.

Post-translationally, this is a cyclic peptide.

Probably participates in a plant defense mechanism. In Viola biflora (Yellow wood violet), this protein is Cyclotide vitri-A.